The chain runs to 164 residues: Translation initiation factor IF-3 (164 aa).

Belongs to the IF-3 family. Monomer.

The protein resides in the cytoplasm. In terms of biological role, IF-3 binds to the 30S ribosomal subunit and shifts the equilibrium between 70S ribosomes and their 50S and 30S subunits in favor of the free subunits, thus enhancing the availability of 30S subunits on which protein synthesis initiation begins. The polypeptide is Translation initiation factor IF-3 (Bordetella bronchiseptica (strain ATCC BAA-588 / NCTC 13252 / RB50) (Alcaligenes bronchisepticus)).